Reading from the N-terminus, the 156-residue chain is Putative pre-16S rRNA nuclease (156 aa).

The protein belongs to the YqgF nuclease family.

It is found in the cytoplasm. In terms of biological role, could be a nuclease involved in processing of the 5'-end of pre-16S rRNA. The polypeptide is Putative pre-16S rRNA nuclease (Ehrlichia canis (strain Jake)).